We begin with the raw amino-acid sequence, 1480 residues long: Nonribosomal peptide synthetase-like enzyme fsqF (1480 aa).

The tract at residues 31 to 59 (SPFADEPSIDVPSTHLPVVTPRSKTANDR) is disordered. The adenylation domain stretch occupies residues 132-527 (DSARATPHAP…VGRTDDQVKY (396 aa)). The Carrier domain maps to 662–741 (STARTIAREY…SIASLIDANS (80 aa)). Serine 700 bears the O-(pantetheine 4'-phosphoryl)serine mark. Positions 739-754 (ANSSPGRGQPLNTQET) are enriched in polar residues. The segment at 739-773 (ANSSPGRGQPLNTQETARLPLRSNGPAPSQQALER) is disordered. The interval 780-1003 (LTGASGFLGI…ACVELGFYNG (224 aa)) is NAD-binding domain. The aminotransferase domain stretch occupies residues 1100-1465 (NAAGTVVHRE…YNTVAEVQEF (366 aa)).

This sequence belongs to the NRP synthetase family.

Its pathway is secondary metabolite biosynthesis. In terms of biological role, nonribosomal peptide synthetase-like enzyme; part of the gene cluster that mediates the biosynthesis of the isoquinoline alkaloids fumisoquin A, fumisoquin B and fumisoquin C; as well as small amounts of fumipyrrole as a shunt metabolite. The products of the cluster lead to a brown coloration and are important for growth and conidiation. The nonribosomal peptide synthetase-like protein fsqF, which lacks a canonical condensation domain, is required for addition of a serine-derived dehydroalanine moiety to activated tyrosine but is not essential for the subsequent steps leading to isoquinoline formation. A different enzyme, most likely the ATP-grasp enzyme fsqD, is responsible for activation of tyrosine. Three additional enzymes encoded by the fsq cluster, the N-methyltransferase fsqC, the phenol 2-monooxygenase fsqG and the FAD-dependent oxidase fsqB, catalyze the formation of the isoquinoline ring system in the fumisoquins. FsqB converts the fspF thiolation domain-bound (2S,4S,5S)-2-amino-6-(3,4-dihydroxyphenyl)-4-hydroxy-5-(methylamino)hexanoyl into isoquinoline. The cyclization most likely proceeds via a two-step mechanism, beginning with FAD-dependent oxidation of the methyl group to an iminium species followed by electrophilic attack on the deprotonated phenol. In Aspergillus fumigatus (strain ATCC MYA-4609 / CBS 101355 / FGSC A1100 / Af293) (Neosartorya fumigata), this protein is Nonribosomal peptide synthetase-like enzyme fsqF.